The primary structure comprises 33 residues: Omega-conotoxin-like Vn2 (33 aa).

Cystine bridges form between Cys-3/Cys-20, Cys-10/Cys-24, and Cys-19/Cys-28. Residue Pro-33 is modified to Proline amide.

Expressed by the venom duct.

It is found in the secreted. Omega-conotoxins act at presynaptic membranes, they bind and block voltage-gated calcium channels (Cav). Has strong insecticidal properties at a dose of only 100 pmol/g of body weight (when injected into the haemocoel of the wax moth G.mellonella larvae). Provoques tremor and uncontrolled movements in insect larvae, that are typical symptoms caused by neurotoxins. On fish G.niger, intraperitoneal injection of the toxin causes full extension of the fins, change in posture, breathing difficulties (at 30 and 100 pmol/g body weight) and death (at 100 pmol/g body weight). This Conus ventricosus (Mediterranean cone) protein is Omega-conotoxin-like Vn2.